A 365-amino-acid chain; its full sequence is Chorismate synthase (365 aa).

The segment covering 41–51 has biased composition (basic and acidic residues); that stretch reads IQKELDRRRPG. The segment at 41-62 is disordered; it reads IQKELDRRRPGQSEVSTPRSEA. Arg48 lines the NADP(+) pocket. FMN contacts are provided by residues 125–127, Gly285, 300–304, and Arg327; these read RSS and KPTPS.

This sequence belongs to the chorismate synthase family. Requires FMNH2 as cofactor.

It catalyses the reaction 5-O-(1-carboxyvinyl)-3-phosphoshikimate = chorismate + phosphate. The protein operates within metabolic intermediate biosynthesis; chorismate biosynthesis; chorismate from D-erythrose 4-phosphate and phosphoenolpyruvate: step 7/7. Catalyzes the anti-1,4-elimination of the C-3 phosphate and the C-6 proR hydrogen from 5-enolpyruvylshikimate-3-phosphate (EPSP) to yield chorismate, which is the branch point compound that serves as the starting substrate for the three terminal pathways of aromatic amino acid biosynthesis. This reaction introduces a second double bond into the aromatic ring system. The sequence is that of Chorismate synthase from Methanosarcina acetivorans (strain ATCC 35395 / DSM 2834 / JCM 12185 / C2A).